Consider the following 429-residue polypeptide: MEVNDGERVVIAKPVASRPSSSSGFRTFTELLTDSVTVSPQTTCHEIVDAAIRPKTLRFNQPVAASVSCPRAEVKGIGNGMSCDDDSDSRNYVVYKPKAKLVSKATVSALANMLQGNRQQTWRQSEAVSYGKSVSQGTHRAGPNLVQKVPSFTESETSTGDRSSVDGYNWRKYGQKQVKGSECPRSYYKCTHPKCPVKKKVERSVEGQVSEIVYQGEHNHSKPSCPLPRRASSSISSGFQKPPKSIASEGSMGQDPNNNLYSPLWNNQSNDSTQNRTEKMSEGCVITPFEFAVPRSTNSNPGTSDSGCKSSQCDEGELDDPSRSKRRKNEKQSSEAGVSQGSVESDSLEDGFRWRKYGQKVVGGNAYPRSYYRCTSANCRARKHVERASDDPRAFITTYEGKHNHHLLLSPPSSSTLPFNSPQLSKQTI.

The segment at residues 159 to 223 (TGDRSSVDGY…YQGEHNHSKP (65 aa)) is a DNA-binding region (WRKY 1). Positions 190, 195, 218, and 220 each coordinate Zn(2+). Disordered regions lie at residues 214–279 (YQGE…RTEK) and 292–348 (AVPR…SDSL). 3 stretches are compositionally biased toward polar residues: residues 254–275 (QDPN…STQN), 295–313 (RSTN…SSQC), and 334–345 (SEAGVSQGSVES). The WRKY 2 DNA-binding region spans 343 to 408 (VESDSLEDGF…YEGKHNHHLL (66 aa)). The Zn(2+) site is built by Cys374, Cys379, His403, and His405. The segment covering 410 to 422 (SPPSSSTLPFNSP) has biased composition (low complexity). The interval 410–429 (SPPSSSTLPFNSPQLSKQTI) is disordered.

This sequence belongs to the WRKY group I family. In terms of tissue distribution, leaf promordia, trichomes, atrichoblasts, fertilized eggs, seed coat.

It is found in the nucleus. Functionally, transcription factor. Interacts specifically with the W box (5'-(T)TGAC[CT]-3'), a frequently occurring elicitor-responsive cis-acting element. Regulates trichome development, production of mucilage and tannin in seed coats, and maybe root hair development. The protein is WRKY transcription factor 44 (WRKY44) of Arabidopsis thaliana (Mouse-ear cress).